The chain runs to 1906 residues: DENN domain-containing protein 4C (1906 aa).

The MABP domain maps to 40 to 199; the sequence is KAPITDIAVI…NVFLCYKKSV (160 aa). The uDENN domain maps to 191-363; the sequence is VFLCYKKSVP…NIPFPSPQRP (173 aa). The 137-residue stretch at 384–520 folds into the cDENN domain; the sequence is PLPLSGANFS…PCKSLLGTLR (137 aa). Residues 522–640 form the dDENN domain; it reads LYQQLCSVHR…CSFVSDKDTG (119 aa). Ser-702, Ser-736, and Ser-740 each carry phosphoserine. The PPR repeat unit spans residues 818-852; it reads DEVCYRVVMQLCGLWVNPVLAVRVLFEMKTARIKP. Positions 904–917 are enriched in polar residues; that stretch reads SQVFSISGGQSDQG. 2 disordered regions span residues 904–942 and 963–984; these read SQVFSISGGQSDQGYGSKDELVKEGADGHAPEEHTPPEL and LQPTPEPQSPTEPPAWGSSIVK. Basic and acidic residues predominate over residues 920 to 939; the sequence is SKDELVKEGADGHAPEEHTP. Thr-966 carries the post-translational modification Phosphothreonine. The segment covering 966–975 has biased composition (pro residues); the sequence is TPEPQSPTEP. At Ser-971 the chain carries Phosphoserine. The residue at position 973 (Thr-973) is a Phosphothreonine. Residues Ser-987, Ser-1000, Ser-1043, Ser-1058, Ser-1096, and Ser-1123 each carry the phosphoserine modification. Over residues 1154–1171 the composition is skewed to polar residues; the sequence is NSLQSNSHSDQSRDTQAG. Residues 1154–1184 are disordered; that stretch reads NSLQSNSHSDQSRDTQAGAQDPVNKRSSSYA. Residues Ser-1181, Ser-1221, Ser-1240, Ser-1248, and Ser-1274 each carry the phosphoserine modification. The segment at 1246–1317 is disordered; the sequence is SCSMELHGEG…PQSPYRAYKD (72 aa). Positions 1281-1291 are enriched in basic and acidic residues; that stretch reads PPARDSTETEK. The segment covering 1292 to 1302 has biased composition (polar residues); sequence SSPAVSSSKTL. A phosphoserine mark is found at Ser-1321, Ser-1333, and Ser-1342. Disordered regions lie at residues 1410–1440, 1548–1577, and 1596–1628; these read SPNTSVSGLVPSELTQSNTSLGSSSSSGDVG, STSGDSLQSGSIPSASEPSEHKPTSSSAEP, and ASYTVESSDEIKKTNGDVQSVKMSSVPNSLSKR. Positions 1423-1437 are enriched in low complexity; it reads LTQSNTSLGSSSSSG. Composition is skewed to polar residues over residues 1548 to 1564 and 1611 to 1628; these read STSGDSLQSGSIPSASE and GDVQSVKMSSVPNSLSKR. Ser-1620, Ser-1624, Ser-1626, Ser-1637, and Ser-1796 each carry phosphoserine.

In terms of processing, phosphorylated in response to insulin.

It localises to the cytoplasmic vesicle membrane. The protein resides in the cell membrane. Its subcellular location is the cytoplasm. It is found in the cytosol. Guanine nucleotide exchange factor (GEF) activating RAB10. Promotes the exchange of GDP to GTP, converting inactive GDP-bound RAB10 into its active GTP-bound form. Thereby, stimulates SLC2A4/GLUT4 glucose transporter-enriched vesicles delivery to the plasma membrane in response to insulin. This chain is DENN domain-containing protein 4C (Dennd4c), found in Mus musculus (Mouse).